A 367-amino-acid polypeptide reads, in one-letter code: Phosphoribosylaminoimidazole-succinocarboxamide synthase (367 aa).

The protein belongs to the SAICAR synthetase family.

The catalysed reaction is 5-amino-1-(5-phospho-D-ribosyl)imidazole-4-carboxylate + L-aspartate + ATP = (2S)-2-[5-amino-1-(5-phospho-beta-D-ribosyl)imidazole-4-carboxamido]succinate + ADP + phosphate + 2 H(+). It functions in the pathway purine metabolism; IMP biosynthesis via de novo pathway; 5-amino-1-(5-phospho-D-ribosyl)imidazole-4-carboxamide from 5-amino-1-(5-phospho-D-ribosyl)imidazole-4-carboxylate: step 1/2. The polypeptide is Phosphoribosylaminoimidazole-succinocarboxamide synthase (Shewanella baltica (strain OS185)).